Reading from the N-terminus, the 549-residue chain is Sphingosine-1-phosphate transporter SPNS2 (549 aa).

Disordered regions lie at residues 14–36 (AEEE…GAGG) and 78–97 (PGCA…PASL). Helical transmembrane passes span 141–161 (GLLQ…FGYL), 169–189 (VILS…SFIP), 202–222 (LVGI…GDLF), 229–249 (LMLS…YITG), 261–281 (WALR…LILV), 320–340 (LATS…PLYL), 364–384 (LIFG…GAGA), 398–418 (LVCA…FVAA), 422–442 (IVGA…NWAI), 466–486 (TSHL…SDLI), and 507–527 (LCPF…LFFL).

It belongs to the major facilitator superfamily. Spinster (TC 2.A.1.49) family. In terms of tissue distribution, expression is high in the lungs and liver, low in the lymph nodes, spleen and bone marrow, and very low but detectable in the thymus. Not expressed in red blood cells. Also expressed in the inner ear: expressed in the cochlea, both in the lateral wall and organ of Corti.

Its subcellular location is the cell membrane. The protein resides in the endosome membrane. The catalysed reaction is sphing-4-enine 1-phosphate(in) = sphing-4-enine 1-phosphate(out). It catalyses the reaction sphinganine 1-phosphate(in) = sphinganine 1-phosphate(out). Lipid transporter that specifically mediates export of sphingosine-1-phosphate (sphing-4-enine 1-phosphate, S1P) and sphinganine-1-phosphate in the lymph, thereby playing a role in lymphocyte trafficking. S1P is a bioactive signaling molecule that regulates many physiological processes important for the development and for the immune system. Regulates levels of S1P and the S1P gradient that exists between the high circulating concentrations of S1P and low tissue levels that control lymphocyte trafficking. Required for the egress of T-cells from lymph nodes during an immune response by mediating S1P secretion, which generates a gradient that enables activated T-cells to access lymph. Also required for the egress of immature B-cells from the bone marrow. In contrast, it does not mediate S1P release from red blood cells. Involved in auditory function: S1P release in the inner ear is required for maintenance of the endocochlear potential in the cochlea. In addition to export, also able to mediate S1P import. The protein is Sphingosine-1-phosphate transporter SPNS2 of Mus musculus (Mouse).